The chain runs to 406 residues: Proteasome-activating nucleotidase 1 (406 aa).

Acidic residues predominate over residues 1 to 12 (MTDTVEDVELPY). The tract at residues 1 to 20 (MTDTVEDVELPYDDSASQQD) is disordered. Residues 12–70 (YDDSASQQDKLEALEEQLSTLEEENEEMRDRLLDANAENNKYQQKLERLSHENKKLKQS) adopt a coiled-coil conformation. ATP is bound by residues 192-197 (GTGKTL) and H331. Positions 385–406 (AREKLDQDSEPAAATDVSRTFA) are disordered. Residues 404-406 (TFA) form a docks into pockets in the proteasome alpha-ring to cause gate opening region.

Belongs to the AAA ATPase family. Homohexamer. The hexameric complex has a two-ring architecture resembling a top hat that caps the 20S proteasome core at one or both ends. Upon ATP-binding, the C-terminus of PAN interacts with the alpha-rings of the proteasome core by binding to the intersubunit pockets.

The protein localises to the cytoplasm. ATPase which is responsible for recognizing, binding, unfolding and translocation of substrate proteins into the archaeal 20S proteasome core particle. Is essential for opening the gate of the 20S proteasome via an interaction with its C-terminus, thereby allowing substrate entry and access to the site of proteolysis. Thus, the C-termini of the proteasomal ATPase function like a 'key in a lock' to induce gate opening and therefore regulate proteolysis. Unfolding activity requires energy from ATP hydrolysis, whereas ATP binding alone promotes ATPase-20S proteasome association which triggers gate opening, and supports translocation of unfolded substrates. The protein is Proteasome-activating nucleotidase 1 of Halobacterium salinarum (strain ATCC 700922 / JCM 11081 / NRC-1) (Halobacterium halobium).